The following is a 98-amino-acid chain: NADH-ubiquinone oxidoreductase chain 4L (98 aa).

The next 3 helical transmembrane spans lie at 1-21, 29-49, and 61-81; these read MSMV…GMLV, SLLC…VTIL, and IILL…LVMV.

It belongs to the complex I subunit 4L family. Core subunit of respiratory chain NADH dehydrogenase (Complex I) which is composed of 45 different subunits.

Its subcellular location is the mitochondrion inner membrane. It carries out the reaction a ubiquinone + NADH + 5 H(+)(in) = a ubiquinol + NAD(+) + 4 H(+)(out). Core subunit of the mitochondrial membrane respiratory chain NADH dehydrogenase (Complex I) which catalyzes electron transfer from NADH through the respiratory chain, using ubiquinone as an electron acceptor. Part of the enzyme membrane arm which is embedded in the lipid bilayer and involved in proton translocation. The sequence is that of NADH-ubiquinone oxidoreductase chain 4L (MT-ND4L) from Odobenus rosmarus rosmarus (Atlantic walrus).